Reading from the N-terminus, the 587-residue chain is Aspartate--tRNA(Asp/Asn) ligase (587 aa).

Position 173 (E173) interacts with L-aspartate. The interval 197-200 (QLFK) is aspartate. R219 contacts L-aspartate. ATP contacts are provided by residues 219–221 (RDE) and Q228. An L-aspartate-binding site is contributed by H448. Residue E481 coordinates ATP. R488 is an L-aspartate binding site. 533–536 (GLDR) contributes to the ATP binding site.

The protein belongs to the class-II aminoacyl-tRNA synthetase family. Type 1 subfamily. As to quaternary structure, homodimer.

It localises to the cytoplasm. The enzyme catalyses tRNA(Asx) + L-aspartate + ATP = L-aspartyl-tRNA(Asx) + AMP + diphosphate. Functionally, aspartyl-tRNA synthetase with relaxed tRNA specificity since it is able to aspartylate not only its cognate tRNA(Asp) but also tRNA(Asn). Reaction proceeds in two steps: L-aspartate is first activated by ATP to form Asp-AMP and then transferred to the acceptor end of tRNA(Asp/Asn). This chain is Aspartate--tRNA(Asp/Asn) ligase, found in Alcanivorax borkumensis (strain ATCC 700651 / DSM 11573 / NCIMB 13689 / SK2).